The primary structure comprises 451 residues: Probable tyrosyl-DNA phosphodiesterase (451 aa).

The interval 1–34 (MKRTIQETPGPSSTTVPPPKKLNSQRNGSNLEPG) is disordered. The span at 22 to 32 (LNSQRNGSNLE) shows a compositional bias: polar residues. H131 functions as the Nucleophile in the catalytic mechanism. K133 lines the substrate pocket. Residues 266–269 (SIGS) form an interaction with DNA region. H356 (proton donor/acceptor) is an active-site residue. Residue K358 participates in substrate binding.

This sequence belongs to the tyrosyl-DNA phosphodiesterase family.

It is found in the nucleus. Functionally, DNA repair enzyme that can remove a variety of covalent adducts from DNA through hydrolysis of a 3'-phosphodiester bond, giving rise to DNA with a free 3' phosphate. Catalyzes the hydrolysis of dead-end complexes between DNA and the topoisomerase I active site tyrosine residue. Hydrolyzes 3'-phosphoglycolates on protruding 3' ends on DNA double-strand breaks due to DNA damage by radiation and free radicals. Acts on blunt-ended double-strand DNA breaks and on single-stranded DNA. May have low 3'exonuclease activity and may be able to remove a single nucleoside from the 3'end of DNA and RNA molecules with 3'hydroxyl groups. Has no exonuclease activity towards DNA or RNA with a 3'phosphate. This Caenorhabditis elegans protein is Probable tyrosyl-DNA phosphodiesterase.